The chain runs to 498 residues: 3-octaprenyl-4-hydroxybenzoate carboxy-lyase (498 aa).

Residue Asn175 participates in Mn(2+) binding. Residues 178–180 (IYR), 192–194 (RWL), and 197–198 (RG) each bind prenylated FMN. Glu241 is a Mn(2+) binding site. Asp290 serves as the catalytic Proton donor.

It belongs to the UbiD family. In terms of assembly, homohexamer. Prenylated FMN serves as cofactor. Requires Mn(2+) as cofactor.

The protein resides in the cell membrane. It carries out the reaction a 4-hydroxy-3-(all-trans-polyprenyl)benzoate + H(+) = a 2-(all-trans-polyprenyl)phenol + CO2. Its pathway is cofactor biosynthesis; ubiquinone biosynthesis. In terms of biological role, catalyzes the decarboxylation of 3-octaprenyl-4-hydroxy benzoate to 2-octaprenylphenol, an intermediate step in ubiquinone biosynthesis. The sequence is that of 3-octaprenyl-4-hydroxybenzoate carboxy-lyase from Yersinia pestis bv. Antiqua (strain Antiqua).